The following is a 165-amino-acid chain: MSSRSRSTFLAIACFVLIDWVTKLAVLLYLGNLPDANPILYQYSWGKLLFCICPTFNEGAAFGLFAKYKYFLFFIRITIILGILAFLFLRKKTSSPAIRFSLILLCSGAIGNVGDIVFYRHVVDFISIGYKRWFFPTFNFADIFISLGTLIFIYKLYFPTKQKIK.

A run of 3 helical transmembrane segments spans residues 9–29 (FLAI…VLLY), 69–89 (KYFL…FLFL), and 98–118 (IRFS…DIVF). Active-site residues include D124 and D142. A helical transmembrane segment spans residues 133 to 153 (WFFPTFNFADIFISLGTLIFI).

This sequence belongs to the peptidase A8 family.

The protein resides in the cell inner membrane. It carries out the reaction Release of signal peptides from bacterial membrane prolipoproteins. Hydrolyzes -Xaa-Yaa-Zaa-|-(S,diacylglyceryl)Cys-, in which Xaa is hydrophobic (preferably Leu), and Yaa (Ala or Ser) and Zaa (Gly or Ala) have small, neutral side chains.. It functions in the pathway protein modification; lipoprotein biosynthesis (signal peptide cleavage). Its function is as follows. This protein specifically catalyzes the removal of signal peptides from prolipoproteins. This chain is Lipoprotein signal peptidase, found in Chlamydia abortus (strain DSM 27085 / S26/3) (Chlamydophila abortus).